Reading from the N-terminus, the 398-residue chain is Arginine biosynthesis bifunctional protein ArgJ (398 aa).

Positions 148, 174, 185, 271, 393, and 398 each coordinate substrate. Thr-185 (nucleophile) is an active-site residue.

This sequence belongs to the ArgJ family. As to quaternary structure, heterotetramer of two alpha and two beta chains.

It localises to the cytoplasm. The catalysed reaction is N(2)-acetyl-L-ornithine + L-glutamate = N-acetyl-L-glutamate + L-ornithine. It catalyses the reaction L-glutamate + acetyl-CoA = N-acetyl-L-glutamate + CoA + H(+). The protein operates within amino-acid biosynthesis; L-arginine biosynthesis; L-ornithine and N-acetyl-L-glutamate from L-glutamate and N(2)-acetyl-L-ornithine (cyclic): step 1/1. It functions in the pathway amino-acid biosynthesis; L-arginine biosynthesis; N(2)-acetyl-L-ornithine from L-glutamate: step 1/4. Catalyzes two activities which are involved in the cyclic version of arginine biosynthesis: the synthesis of N-acetylglutamate from glutamate and acetyl-CoA as the acetyl donor, and of ornithine by transacetylation between N(2)-acetylornithine and glutamate. This Listeria monocytogenes serotype 4b (strain F2365) protein is Arginine biosynthesis bifunctional protein ArgJ.